A 57-amino-acid chain; its full sequence is Large ribosomal subunit protein bL32c (57 aa).

The tract at residues Met-1–Lys-21 is disordered.

The protein belongs to the bacterial ribosomal protein bL32 family.

The protein resides in the plastid. It is found in the chloroplast. This is Large ribosomal subunit protein bL32c from Stigeoclonium helveticum (Green alga).